The primary structure comprises 493 residues: Involucrin (493 aa).

Disordered stretches follow at residues 1–47 (MSQQ…CQKV), 60–123 (EEKH…GQLE), and 139–493 (KRDE…GQHE). The span at 76–89 (EQQQPQEQELQQQH) shows a compositional bias: low complexity. 5 stretches are compositionally biased toward basic and acidic residues: residues 90–116 (WEQD…REKQ), 139–151 (KRDE…KEQL), 161–174 (QLKH…HLEL), 184–193 (NLEHQEKPLE), and 201–213 (QLKH…KPLE). The segment covering 228–240 (QEGQSELPEQQRG) has biased composition (polar residues). 5 stretches are compositionally biased toward basic and acidic residues: residues 250–270 (GQLK…HEEG), 282–360 (KHLE…HEGQ), 372–386 (KHLE…HPEQ), 411–431 (KHLE…EQLK), and 439–450 (QLKDLEQQERQL). Residues 473 to 493 (GEVLLPVEQQQQKQEVQGQHE) are compositionally biased toward low complexity.

This sequence belongs to the involucrin family. In terms of assembly, directly or indirectly cross-linked to cornifelin (CNFN). Substrate of transglutaminase. Specific glutamines or lysines are cross-linked to keratins, desmoplakin and to inter involucrin molecules. As to expression, keratinocytes of epidermis and other stratified squamous epithelia.

The protein resides in the cytoplasm. Functionally, part of the insoluble cornified cell envelope (CE) of stratified squamous epithelia. The polypeptide is Involucrin (IVL) (Saguinus oedipus (Cotton-top tamarin)).